The primary structure comprises 268 residues: Ribosomal RNA small subunit methyltransferase A (268 aa).

S-adenosyl-L-methionine contacts are provided by N23, I25, G50, E72, D97, and N116.

The protein belongs to the class I-like SAM-binding methyltransferase superfamily. rRNA adenine N(6)-methyltransferase family. RsmA subfamily.

The protein resides in the cytoplasm. The catalysed reaction is adenosine(1518)/adenosine(1519) in 16S rRNA + 4 S-adenosyl-L-methionine = N(6)-dimethyladenosine(1518)/N(6)-dimethyladenosine(1519) in 16S rRNA + 4 S-adenosyl-L-homocysteine + 4 H(+). In terms of biological role, specifically dimethylates two adjacent adenosines (A1518 and A1519) in the loop of a conserved hairpin near the 3'-end of 16S rRNA in the 30S particle. May play a critical role in biogenesis of 30S subunits. In Rickettsia prowazekii (strain Madrid E), this protein is Ribosomal RNA small subunit methyltransferase A.